Consider the following 92-residue polypeptide: UPF0250 protein Smlt4048 (92 aa).

It belongs to the UPF0250 family.

This chain is UPF0250 protein Smlt4048, found in Stenotrophomonas maltophilia (strain K279a).